An 865-amino-acid polypeptide reads, in one-letter code: Alanine--tRNA ligase (865 aa).

Zn(2+)-binding residues include His-556, His-560, Cys-660, and His-664.

This sequence belongs to the class-II aminoacyl-tRNA synthetase family. Requires Zn(2+) as cofactor.

It localises to the cytoplasm. It carries out the reaction tRNA(Ala) + L-alanine + ATP = L-alanyl-tRNA(Ala) + AMP + diphosphate. Catalyzes the attachment of alanine to tRNA(Ala) in a two-step reaction: alanine is first activated by ATP to form Ala-AMP and then transferred to the acceptor end of tRNA(Ala). Also edits incorrectly charged Ser-tRNA(Ala) and Gly-tRNA(Ala) via its editing domain. In Vesicomyosocius okutanii subsp. Calyptogena okutanii (strain HA), this protein is Alanine--tRNA ligase.